Reading from the N-terminus, the 199-residue chain is uncharacterized protein (199 aa).

This is an uncharacterized protein from Connochaetes taurinus (Blue wildebeest).